A 516-amino-acid polypeptide reads, in one-letter code: GMP synthase [glutamine-hydrolyzing] (516 aa).

In terms of domain architecture, Glutamine amidotransferase type-1 spans 7–199 (KIIILDFGSQ…VFGLCKCQAT (193 aa)). C84 acts as the Nucleophile in catalysis. Active-site residues include H173 and E175. Residues 200 to 391 (WTMQGFIESN…LGLPDEAVHR (192 aa)) enclose the GMPS ATP-PPase domain. 227 to 233 (SGGVDSS) lines the ATP pocket.

As to quaternary structure, homodimer.

The enzyme catalyses XMP + L-glutamine + ATP + H2O = GMP + L-glutamate + AMP + diphosphate + 2 H(+). The protein operates within purine metabolism; GMP biosynthesis; GMP from XMP (L-Gln route): step 1/1. In terms of biological role, catalyzes the synthesis of GMP from XMP. The protein is GMP synthase [glutamine-hydrolyzing] of Desulfotalea psychrophila (strain LSv54 / DSM 12343).